Here is a 261-residue protein sequence, read N- to C-terminus: CD40 ligand (261 aa).

The Cytoplasmic segment spans residues 1–22 (MIETYSQPSPRSVATGPPVSMK). The helical; Signal-anchor for type II membrane protein transmembrane segment at 23-46 (IFMYLLTVFLITQMIGSALFAVYL) threads the bilayer. The Extracellular segment spans residues 47 to 261 (HRRLDKIEDE…GFTSFGLLKL (215 aa)). One can recognise a THD domain in the interval 122 to 261 (IAAHVISEAS…GFTSFGLLKL (140 aa)). An intrachain disulfide couples Cys-178 to Cys-218. An N-linked (GlcNAc...) asparagine glycan is attached at Asn-240.

This sequence belongs to the tumor necrosis factor family. As to quaternary structure, homotrimer. Interacts with CD28. CD40 ligand, soluble form: Exists as either a monomer or a homotrimer. Forms a ternary complex between CD40 and integrins for CD40-CD40LG signaling. The soluble form derives from the membrane form by proteolytic processing.

The protein localises to the cell membrane. Its subcellular location is the cell surface. The protein resides in the secreted. Cytokine that acts as a ligand to CD40/TNFRSF5. Costimulates T-cell proliferation and cytokine production. Its cross-linking on T-cells generates a costimulatory signal which enhances the production of IL4 and IL10 in conjunction with the TCR/CD3 ligation and CD28 costimulation. Induces the activation of NF-kappa-B. Induces the activation of kinases MAPK8 and PAK2 in T-cells. Mediates B-cell proliferation in the absence of co-stimulus as well as IgE production in the presence of IL4. Involved in immunoglobulin class switching. Its function is as follows. Acts as a ligand for integrins, specifically ITGA5:ITGB1 and ITGAV:ITGB3; both integrins and the CD40 receptor are required for activation of CD40-CD40LG signaling, which have cell-type dependent effects, such as B-cell activation, NF-kappa-B signaling and anti-apoptotic signaling. This Bos taurus (Bovine) protein is CD40 ligand (CD40LG).